We begin with the raw amino-acid sequence, 312 residues long: tRNA (adenine(58)-N(1))-methyltransferase catalytic subunit trmt61a (312 aa).

Residues Leu85, 112–114, Glu133, Arg138, 161–162, and Asp183 each bind S-adenosyl-L-methionine; these read SGS and DA.

Belongs to the class I-like SAM-binding methyltransferase superfamily. TRM61 family. As to quaternary structure, heterotetramer; composed of two copies of trmt6 and two copies of trmt61a.

It localises to the nucleus. The catalysed reaction is adenosine(58) in tRNA + S-adenosyl-L-methionine = N(1)-methyladenosine(58) in tRNA + S-adenosyl-L-homocysteine + H(+). Inhibited by calcium and magnesium ions and spermidine. Enhanced by KCl, NaCl and NH(4)Cl in concentrations from 0.1-0.25 M. Concentrations of more than 0.3 M are inhibitory. Catalytic subunit of tRNA (adenine-N(1)-)-methyltransferase, which catalyzes the formation of N(1)-methyladenine at position 58 (m1A58) in initiator methionyl-tRNA. This Dictyostelium discoideum (Social amoeba) protein is tRNA (adenine(58)-N(1))-methyltransferase catalytic subunit trmt61a (trmt61a).